The sequence spans 289 residues: Acetyl-coenzyme A carboxylase carboxyl transferase subunit beta (289 aa).

The 262-residue stretch at 28–289 (VMTKCPKCKK…QGGEMAVWQS (262 aa)) folds into the CoA carboxyltransferase N-terminal domain. Cysteine 32, cysteine 35, cysteine 51, and cysteine 54 together coordinate Zn(2+). Residues 32–54 (CPKCKKIMYTKELLKNLKVCVNC) form a C4-type zinc finger.

This sequence belongs to the AccD/PCCB family. As to quaternary structure, acetyl-CoA carboxylase is a heterohexamer composed of biotin carboxyl carrier protein (AccB), biotin carboxylase (AccC) and two subunits each of ACCase subunit alpha (AccA) and ACCase subunit beta (AccD). The cofactor is Zn(2+).

It localises to the cytoplasm. The catalysed reaction is N(6)-carboxybiotinyl-L-lysyl-[protein] + acetyl-CoA = N(6)-biotinyl-L-lysyl-[protein] + malonyl-CoA. The protein operates within lipid metabolism; malonyl-CoA biosynthesis; malonyl-CoA from acetyl-CoA: step 1/1. Functionally, component of the acetyl coenzyme A carboxylase (ACC) complex. Biotin carboxylase (BC) catalyzes the carboxylation of biotin on its carrier protein (BCCP) and then the CO(2) group is transferred by the transcarboxylase to acetyl-CoA to form malonyl-CoA. This chain is Acetyl-coenzyme A carboxylase carboxyl transferase subunit beta, found in Bacillus cereus (strain ATCC 10987 / NRS 248).